Here is a 33-residue protein sequence, read N- to C-terminus: Large ribosomal subunit protein eL21 (33 aa).

The protein belongs to the eukaryotic ribosomal protein eL21 family. Component of the large ribosomal subunit.

It is found in the cytoplasm. Its subcellular location is the cytosol. The protein resides in the endoplasmic reticulum. Component of the large ribosomal subunit. The ribosome is a large ribonucleoprotein complex responsible for the synthesis of proteins in the cell. The protein is Large ribosomal subunit protein eL21 (rpl21) of Xenopus laevis (African clawed frog).